The primary structure comprises 489 residues: Lysine--tRNA ligase (489 aa).

Glutamate 399 and glutamate 406 together coordinate Mg(2+).

Belongs to the class-II aminoacyl-tRNA synthetase family. In terms of assembly, homodimer. Mg(2+) serves as cofactor.

It localises to the cytoplasm. The catalysed reaction is tRNA(Lys) + L-lysine + ATP = L-lysyl-tRNA(Lys) + AMP + diphosphate. The chain is Lysine--tRNA ligase (lysS) from Mycoplasma pneumoniae (strain ATCC 29342 / M129 / Subtype 1) (Mycoplasmoides pneumoniae).